Here is a 610-residue protein sequence, read N- to C-terminus: Aspartate--tRNA(Asp/Asn) ligase (610 aa).

Glu177 serves as a coordination point for L-aspartate. Residues 201–204 (QLFK) are aspartate. Arg223 contributes to the L-aspartate binding site. ATP-binding positions include 223–225 (RDE) and Gln232. His461 contributes to the L-aspartate binding site. An ATP-binding site is contributed by Glu499. Arg506 is an L-aspartate binding site. Residue 551–554 (GVDR) participates in ATP binding.

The protein belongs to the class-II aminoacyl-tRNA synthetase family. Type 1 subfamily. Homodimer.

It localises to the cytoplasm. It carries out the reaction tRNA(Asx) + L-aspartate + ATP = L-aspartyl-tRNA(Asx) + AMP + diphosphate. In terms of biological role, aspartyl-tRNA synthetase with relaxed tRNA specificity since it is able to aspartylate not only its cognate tRNA(Asp) but also tRNA(Asn). Reaction proceeds in two steps: L-aspartate is first activated by ATP to form Asp-AMP and then transferred to the acceptor end of tRNA(Asp/Asn). The sequence is that of Aspartate--tRNA(Asp/Asn) ligase from Parasynechococcus marenigrum (strain WH8102).